The chain runs to 675 residues: Methionine--tRNA ligase (675 aa).

A 'HIGH' region motif is present at residues 15-25 (PYANGSIHLGH). Cys146, Cys149, Cys159, and Cys162 together coordinate Zn(2+). Positions 332–336 (KMSKS) match the 'KMSKS' region motif. Lys335 is a binding site for ATP. Residues 573–675 (DFAKIDMRIA…SGAKPGHQVK (103 aa)) form the tRNA-binding domain.

It belongs to the class-I aminoacyl-tRNA synthetase family. MetG type 1 subfamily. As to quaternary structure, homodimer. Requires Zn(2+) as cofactor.

The protein resides in the cytoplasm. The catalysed reaction is tRNA(Met) + L-methionine + ATP = L-methionyl-tRNA(Met) + AMP + diphosphate. In terms of biological role, is required not only for elongation of protein synthesis but also for the initiation of all mRNA translation through initiator tRNA(fMet) aminoacylation. This chain is Methionine--tRNA ligase, found in Proteus mirabilis (strain HI4320).